The following is a 727-amino-acid chain: Glucans biosynthesis glucosyltransferase H (727 aa).

A disordered region spans residues 18-41 (SAMPNERPGAMEPQKLSKMPEGFP). Transmembrane regions (helical) follow at residues 58-78 (FLVV…MGAV), 97-117 (VNFC…LILL), 278-298 (LQQF…GWWV), 408-428 (IMAY…LMLA), 460-480 (LFYI…LLLL), 496-516 (IFSV…MMFI), and 572-592 (LLAW…ISAW).

This sequence belongs to the glycosyltransferase 2 family. OpgH subfamily.

The protein localises to the cell inner membrane. It participates in glycan metabolism; osmoregulated periplasmic glucan (OPG) biosynthesis. Its function is as follows. Involved in the biosynthesis of osmoregulated periplasmic glucans (OPGs). The polypeptide is Glucans biosynthesis glucosyltransferase H (Shewanella baltica (strain OS155 / ATCC BAA-1091)).